The primary structure comprises 190 residues: Somatotropin (190 aa).

Residue H19 coordinates Zn(2+). Cysteines 52 and 163 form a disulfide. E172 is a Zn(2+) binding site. The cysteines at positions 180 and 188 are disulfide-linked.

It belongs to the somatotropin/prolactin family.

Its subcellular location is the secreted. Functionally, growth hormone plays an important role in growth control and involved in the regulation of several anabolic processes. The sequence is that of Somatotropin (GH) from Crocodylus novaeguineae (Crocodile).